Here is a 61-residue protein sequence, read N- to C-terminus: Large ribosomal subunit protein uL29 (61 aa).

It belongs to the universal ribosomal protein uL29 family.

This is Large ribosomal subunit protein uL29 from Xanthomonas euvesicatoria pv. vesicatoria (strain 85-10) (Xanthomonas campestris pv. vesicatoria).